Consider the following 599-residue polypeptide: Elongation factor 4 (599 aa).

A tr-type G domain is found at 5–187; the sequence is SHIRNFSIIA…RLVTVIPAPE (183 aa). Residues 17-22 and 134-137 contribute to the GTP site; these read DHGKST and NKMD.

It belongs to the TRAFAC class translation factor GTPase superfamily. Classic translation factor GTPase family. LepA subfamily.

It localises to the cell inner membrane. It catalyses the reaction GTP + H2O = GDP + phosphate + H(+). Functionally, required for accurate and efficient protein synthesis under certain stress conditions. May act as a fidelity factor of the translation reaction, by catalyzing a one-codon backward translocation of tRNAs on improperly translocated ribosomes. Back-translocation proceeds from a post-translocation (POST) complex to a pre-translocation (PRE) complex, thus giving elongation factor G a second chance to translocate the tRNAs correctly. Binds to ribosomes in a GTP-dependent manner. This is Elongation factor 4 from Pseudomonas paraeruginosa (strain DSM 24068 / PA7) (Pseudomonas aeruginosa (strain PA7)).